A 342-amino-acid chain; its full sequence is N-acetyl-gamma-glutamyl-phosphate reductase (342 aa).

The active site involves Cys-149.

This sequence belongs to the NAGSA dehydrogenase family. Type 1 subfamily.

The protein localises to the cytoplasm. It catalyses the reaction N-acetyl-L-glutamate 5-semialdehyde + phosphate + NADP(+) = N-acetyl-L-glutamyl 5-phosphate + NADPH + H(+). The protein operates within amino-acid biosynthesis; L-arginine biosynthesis; N(2)-acetyl-L-ornithine from L-glutamate: step 3/4. Functionally, catalyzes the NADPH-dependent reduction of N-acetyl-5-glutamyl phosphate to yield N-acetyl-L-glutamate 5-semialdehyde. The sequence is that of N-acetyl-gamma-glutamyl-phosphate reductase from Cereibacter sphaeroides (strain ATCC 17029 / ATH 2.4.9) (Rhodobacter sphaeroides).